Here is a 159-residue protein sequence, read N- to C-terminus: Small ribosomal subunit protein uS17 (159 aa).

Belongs to the universal ribosomal protein uS17 family.

This chain is Small ribosomal subunit protein uS17 (RPS11), found in Euphorbia esula (Leafy spurge).